The following is a 318-amino-acid chain: Protein LplB (318 aa).

6 helical membrane-spanning segments follow: residues 35 to 55, 94 to 114, 130 to 150, 182 to 202, 236 to 256, and 289 to 309; these read LIPG…GVLI, LMLA…LALL, FIYV…FVFF, IVMQ…LAAL, IIVL…EQVY, and AVGL…NYIA. Positions 90–305 constitute an ABC transmembrane type-1 domain; the sequence is LRNTLMLASL…VVGIILIFGA (216 aa).

Belongs to the binding-protein-dependent transport system permease family. MalFG subfamily.

The protein resides in the cell membrane. This Bacillus subtilis (strain 168) protein is Protein LplB (lplB).